The following is a 497-amino-acid chain: FAD-linked oxidoreductase fmqD (497 aa).

The signal sequence occupies residues 1-17 (MQYIPFLISGLVPVALS). In terms of domain architecture, FAD-binding PCMH-type spans 68 to 243 (NDPSYVATVK…TSATYRIYDQ (176 aa)). N-linked (GlcNAc...) asparagine glycosylation is found at asparagine 99, asparagine 261, and asparagine 288.

The protein belongs to the oxygen-dependent FAD-linked oxidoreductase family.

It localises to the secreted. It is found in the cell wall. It participates in alkaloid biosynthesis. Its function is as follows. FAD-linked oxidoreductase; part of the gene cluster that mediates the biosynthesis of the antitumor fumiquinazolines that confer a dual-usage capability to defend against phagocytes in the environment and animal hosts. The simplest member is fumiquinazoline F (FQF) with a 6-6-6 tricyclic core derived from anthranilic acid (Ant), tryptophan (Trp), and alanine (Ala). The trimodular NRPS fmqA is responsible for FQF formation. Modules 1, 2 and 3 of fmqA are predicted to activate and load Ant, Trp and Ala, respectively, providing for the assembly of an Ant-Trp-Ala-S-enzyme intermediate that would undergo double cyclization for chain release and generation of the tricyclic 6-6-6 product fumiquinazoline F. The presence of an E domain predicted for module 2 of fmqA is consistent with epimerization of L-Trp to D-Trp during assembly to generate the R-stereocenter at C14 of FQF. The FAD-dependent monooxygenase fmqB and the monomodular NRPS fmqC then maturate FQF to FQA. FmqB oxidizes the 2',3'-double bond of the indole side chain of FQF, and fmqC activates L-Ala as the adenylate, installs it as the pantetheinyl thioester on its carrier protein domain, and acylates the oxidized indole for subsequent intramolecular cyclization to create the 6-5-5-imidazolindolone of FQA. The FAD-linked oxidoreductase fmqD introduces a third layer of scaffold complexity by converting FQA to the spirohemiaminal FQC, presumably by catalyzing the formation of a transient imine within the pyrazinone ring. FQC subsequently converts nonenzymatically to the known cyclic aminal FQD. The protein is FAD-linked oxidoreductase fmqD of Aspergillus fumigatus (strain ATCC MYA-4609 / CBS 101355 / FGSC A1100 / Af293) (Neosartorya fumigata).